The following is a 382-amino-acid chain: MTRAGLSPLAWLADIEQRRRAEGLRRELRVRPPVAAELDLASNDYLGLSQHPDVLDGGVEALRTWGGGAGGSRLVTGNTELHEAFEHQLASFLGAESALVFSSGYTANLGALVALSGPGSLIVSDALSHASLVDACRLSRARVVVSPHRDVDAVDAALAARTEERAVVVTESVFSADGDLAPLRDLHAVCRRHGALLLVDEAHGLGVRGTRGQGLLHEVGLAGAPDIVMTTTLSKALGSQGGAVLGPEAVRAHLIDTARSFIFDTGLAPAAVGAASAALRVLDAEPQRARAVLDRAAELATIAGVTEAPVSAVVSVILGDPEIAVGAAAACLDRGVRVGCFRPPTVPAGTSRLRLAARASLTDDEMALARQVLTDVLATARA.

Substrate is bound at residue R26. 104–105 (GY) is a pyridoxal 5'-phosphate binding site. H129 provides a ligand contact to substrate. Residues S175, 200–203 (DEAH), and 232–235 (TLSK) contribute to the pyridoxal 5'-phosphate site. At K235 the chain carries N6-(pyridoxal phosphate)lysine. A substrate-binding site is contributed by T345.

This sequence belongs to the class-II pyridoxal-phosphate-dependent aminotransferase family. BioF subfamily. As to quaternary structure, homodimer. Requires pyridoxal 5'-phosphate as cofactor.

The enzyme catalyses 6-carboxyhexanoyl-[ACP] + L-alanine + H(+) = (8S)-8-amino-7-oxononanoate + holo-[ACP] + CO2. The protein operates within cofactor biosynthesis; biotin biosynthesis. Its function is as follows. Catalyzes the decarboxylative condensation of pimeloyl-[acyl-carrier protein] and L-alanine to produce 8-amino-7-oxononanoate (AON), [acyl-carrier protein], and carbon dioxide. This chain is 8-amino-7-oxononanoate synthase (bioF), found in Mycolicibacterium smegmatis (strain ATCC 700084 / mc(2)155) (Mycobacterium smegmatis).